Reading from the N-terminus, the 276-residue chain is Rhomboid protease GlpG (276 aa).

The next 6 membrane-spanning stretches (helical) occupy residues 94 to 114, 142 to 162, 169 to 189, 192 to 212, 229 to 249, and 250 to 270; these read GPVT…MSLI, IFMH…WYLG, LGSG…GYVQ, FSGP…GYVW, LIIF…GMSM, and ANGA…VDTL. Catalysis depends on serine 201, which acts as the Nucleophile. The active site involves histidine 254.

Belongs to the peptidase S54 family.

The protein localises to the cell inner membrane. It carries out the reaction Cleaves type-1 transmembrane domains using a catalytic dyad composed of serine and histidine that are contributed by different transmembrane domains.. In terms of biological role, rhomboid-type serine protease that catalyzes intramembrane proteolysis. This is Rhomboid protease GlpG from Salmonella typhi.